An 814-amino-acid chain; its full sequence is MKKIVSLVCVLVMLVSILGSFSVVAASPVKGFQVSGTKLLDASGNELVMRGMRDISAIDLVKEIKIGWNLGNTLDAPTETAWGNPRTTKAMIEKVREMGFNAVRVPVTWDTHIGPAPDYKIDEAWLNRVEEVVNYVLDCGMYAIINVHHDNTWIIPTYANEQRSKEKLVKVWEQIATRFKDYDDHLLFETMNEPREVGSPMEWMGGTYENRDVINRFNLAVVNTIRASGGNNDKRFILVPTNAATGLDVALNDLVIPNNDSRVIVSIHAYSPYFFAMDVNGTSYWGSDYDKASLTSELDAIYNRFVKNGRAVIIGEFGTIDKNNLSSRVAHAEHYAREAVSRGIAVFWWDNGYYNPGDAETYALLNRKTLSWYYPEIVQALMRGAGVEPLVSPTPTPTLMPTPSPTVTANILYGDVNGDGKINSTDCTMLKRYILRGIEEFPSPSGIIAADVNADLKINSTDLVLMKKYLLRSIDKFPAEDSQTPDEDNPGILYNGRFDFSDPNGPKCAWSGSNVELNFYGTEASVTIKSGGENWFQAIVDGNPLPPFSVNATTSTVKLVSGLAEGAHHLVLWKRTEASLGEVQFLGFDFGSGKLLAAPKPLERKIEFIGDSITCAYGNEGTSKEQSFTPKNENSYMSYAAITARNLNASANMIAWSGIGLTMNYGGAPGPLIMDRYPYTLPYSGVRWDFSKYVPQVVVINLGTNDFSTSFADKTKFVTAYKNLISEVRRNYPDAHIFCCVGPMLWGTGLDLCRSYVTEVVNDCNRSGDLKVYFVEFPQQDGSTGYGEDWHPSIATHQLMAERLTAEIKNKLGW.

The first 34 residues, 1 to 34 (MKKIVSLVCVLVMLVSILGSFSVVAASPVKGFQV), serve as a signal peptide directing secretion. The cellulase stretch occupies residues 35–354 (SGTKLLDASG…AVFWWDNGYY (320 aa)). Catalysis depends on glutamate 193, which acts as the Proton donor; for cellulase activity. Catalysis depends on glutamate 316, which acts as the Nucleophile; for cellulase activity. In terms of domain architecture, Dockerin spans 409-479 (ANILYGDVNG…LLRSIDKFPA (71 aa)). Residues aspartate 415, asparagine 417, aspartate 419, glycine 420, lysine 421, aspartate 426, aspartate 451, valine 452, asparagine 453, aspartate 455, lysine 457, and aspartate 462 each contribute to the Ca(2+) site. Residues 490-814 (PGILYNGRFD…TAEIKNKLGW (325 aa)) are esterase. The Nucleophile; for esterase activity role is filled by serine 612.

This sequence in the N-terminal section; belongs to the glycosyl hydrolase 5 (cellulase A) family. In the C-terminal section; belongs to the carbohydrate esterase 2 (CE2) family.

It is found in the secreted. It carries out the reaction Endohydrolysis of (1-&gt;4)-beta-D-glucosidic linkages in cellulose, lichenin and cereal beta-D-glucans.. It catalyses the reaction Deacetylation of xylans and xylo-oligosaccharides.. The protein operates within glycan metabolism; cellulose degradation. It participates in glycan degradation; xylan degradation. Its activity is regulated as follows. Esterase activity of the CE2 module is inhibited when this domain binds to cellohexaose or beta-glucan. Its function is as follows. Multifunctional enzyme involved in the degradation of plant cell wall polysaccharides. Displays endoglucanase activity against carboxymethyl cellulose (CMC) and barley beta-glucan. Also catalyzes the deacetylation of acetylated birchwood xylan and glucomannan, with a preference for the latter, and of the synthetic substrate 4-nitrophenyl acetate (4-NPAc). This Acetivibrio thermocellus (strain ATCC 27405 / DSM 1237 / JCM 9322 / NBRC 103400 / NCIMB 10682 / NRRL B-4536 / VPI 7372) (Clostridium thermocellum) protein is Cellulase/esterase CelE.